Reading from the N-terminus, the 185-residue chain is Ribosome-recycling factor (185 aa).

The disordered stretch occupies residues 145-164; that stretch reads DGEAGEDEVSRAEKDLDKTT.

This sequence belongs to the RRF family.

It is found in the cytoplasm. Responsible for the release of ribosomes from messenger RNA at the termination of protein biosynthesis. May increase the efficiency of translation by recycling ribosomes from one round of translation to another. This chain is Ribosome-recycling factor, found in Mycobacterium sp. (strain JLS).